The chain runs to 391 residues: Ferrochelatase (391 aa).

Positions 196 and 281 each coordinate Fe cation.

It belongs to the ferrochelatase family.

It localises to the cytoplasm. It carries out the reaction heme b + 2 H(+) = protoporphyrin IX + Fe(2+). It participates in porphyrin-containing compound metabolism; protoheme biosynthesis; protoheme from protoporphyrin-IX: step 1/1. Its function is as follows. Catalyzes the ferrous insertion into protoporphyrin IX. The chain is Ferrochelatase from Prochlorococcus marinus (strain NATL2A).